The sequence spans 103 residues: Large ribosomal subunit protein bL21 (103 aa).

It belongs to the bacterial ribosomal protein bL21 family. In terms of assembly, part of the 50S ribosomal subunit. Contacts protein L20.

Its function is as follows. This protein binds to 23S rRNA in the presence of protein L20. The protein is Large ribosomal subunit protein bL21 of Colwellia psychrerythraea (strain 34H / ATCC BAA-681) (Vibrio psychroerythus).